Reading from the N-terminus, the 363-residue chain is Histidinol-phosphate aminotransferase (363 aa).

Lys-218 is modified (N6-(pyridoxal phosphate)lysine).

The protein belongs to the class-II pyridoxal-phosphate-dependent aminotransferase family. Histidinol-phosphate aminotransferase subfamily. In terms of assembly, homodimer. Pyridoxal 5'-phosphate serves as cofactor.

It carries out the reaction L-histidinol phosphate + 2-oxoglutarate = 3-(imidazol-4-yl)-2-oxopropyl phosphate + L-glutamate. It participates in amino-acid biosynthesis; L-histidine biosynthesis; L-histidine from 5-phospho-alpha-D-ribose 1-diphosphate: step 7/9. This Xanthomonas oryzae pv. oryzae (strain MAFF 311018) protein is Histidinol-phosphate aminotransferase.